Consider the following 686-residue polypeptide: Protein MxiA (686 aa).

6 helical membrane passes run 28–52, 105–129, 197–216, 232–256, 274–292, and 299–315; these read LIIPLPTYLVDFLIGLNIVLAILVF, FVIGDSLAVGFVIFSIVTVVQFIVI, AIAGIIIIFVNLIGGISVGM, ILTIGDGLVSQIPALLISISAGFIV, IFGNPFVLIVTSALALAIG, and FFVFFLIAVTLTALFYY.

It belongs to the FHIPEP (flagella/HR/invasion proteins export pore) family.

It localises to the cell inner membrane. In terms of biological role, necessary for the secretion of IPA invasins. The polypeptide is Protein MxiA (mxiA) (Shigella flexneri).